The following is an 844-amino-acid chain: 3',5'-cyclic-AMP phosphodiesterase 4A (844 aa).

Positions 1 to 124 (MEPPAAPSER…RSPLDSQASP (124 aa)) are disordered. A Phosphoserine modification is found at Ser-13. Over residues 36-46 (QPRTPIRIQQR) the composition is skewed to low complexity. Over residues 51-78 (SAERSEPERSPHRPIERADAVDTGDRPG) the composition is skewed to basic and acidic residues. The segment covering 82-91 (TRMSWPSSFH) has biased composition (polar residues). Phosphoserine occurs at positions 147, 152, 160, 204, and 333. Residues 343-672 (VKTDQEDLLA…DWYHSAIRQS (330 aa)) form the PDEase domain. Lys-344 participates in a covalent cross-link: Glycyl lysine isopeptide (Lys-Gly) (interchain with G-Cter in SUMO). His-419 acts as the Proton donor in catalysis. Residue His-419 coordinates 3',5'-cyclic AMP. 2 residues coordinate AMP: His-419 and His-423. Zn(2+)-binding residues include His-423, His-459, Asp-460, and Asp-577. AMP contacts are provided by Asp-460, Asp-577, Gln-628, and Phe-631. Residue Asp-460 coordinates Mg(2+). Residue Asp-460 participates in Mn(2+) binding. Positions 628 and 631 each coordinate 3',5'-cyclic AMP. A phosphoserine mark is found at Ser-672 and Ser-674. The segment at 819 to 844 (ACSGTSGDNSAVISAPGRWGSGGDPA) is disordered. Residues 820–830 (CSGTSGDNSAV) show a composition bias toward polar residues.

It belongs to the cyclic nucleotide phosphodiesterase family. PDE4 subfamily. Interacts with LYN (via SH3 domain). Interacts with ARRB2. Zn(2+) serves as cofactor. Mg(2+) is required as a cofactor. It depends on Mn(2+) as a cofactor. Post-translationally, proteolytically cleaved by CASP3.

It localises to the cytoplasm. It is found in the cytosol. The protein resides in the membrane. It catalyses the reaction 3',5'-cyclic AMP + H2O = AMP + H(+). It functions in the pathway purine metabolism; 3',5'-cyclic AMP degradation; AMP from 3',5'-cyclic AMP: step 1/1. With respect to regulation, inhibited by rolipram and diazepam. Functionally, hydrolyzes the second messenger 3',5'-cyclic AMP (cAMP), which is a key regulator of many important physiological processes. In terms of biological role, efficiently hydrolyzes cAMP. The sequence is that of 3',5'-cyclic-AMP phosphodiesterase 4A (Pde4a) from Mus musculus (Mouse).